Here is a 329-residue protein sequence, read N- to C-terminus: Ferredoxin--NAD(P)(+) reductase CarAd (329 aa).

The 2Fe-2S ferredoxin-type domain occupies 2 to 92; that stretch reads YQLKIEGQAP…DLRIKVAVQD (91 aa). Residues Cys-35, Cys-40, Cys-43, and Cys-76 each coordinate [2Fe-2S] cluster. The 101-residue stretch at 100 to 200 folds into the FAD-binding FR-type domain; the sequence is ISRMEAEVVE…TGPMGTSFFR (101 aa).

Monomer. Carbazole 1,9a-dioxygenase complex consists of a terminal oxygenase component CarAa, a ferredoxin reductase component CarAd and a ferredoxin component CarAc. [2Fe-2S] cluster serves as cofactor. It depends on FAD as a cofactor.

The enzyme catalyses 2 reduced [2Fe-2S]-[ferredoxin] + NAD(+) + H(+) = 2 oxidized [2Fe-2S]-[ferredoxin] + NADH. It catalyses the reaction 2 reduced [2Fe-2S]-[ferredoxin] + NADP(+) + H(+) = 2 oxidized [2Fe-2S]-[ferredoxin] + NADPH. Part of the multicomponent carbazole 1,9a-dioxygenase (CARDO), that converts carbazole (CAR) into 2-aminobiphenyl-2,3-diol. It can use both NAD and NADP as electron donors, but NAD is supposed to be the physiological electron donor. The protein is Ferredoxin--NAD(P)(+) reductase CarAd (carAd) of Metapseudomonas resinovorans (Pseudomonas resinovorans).